The following is a 140-amino-acid chain: Protein S40-1 (140 aa).

The segment at 16–58 (YFPIRRREDGNEKENNRPVDFRENSERVWNKSSRRSKTTPLPS) is disordered. Over residues 20 to 44 (RRREDGNEKENNRPVDFRENSERVW) the composition is skewed to basic and acidic residues.

The protein belongs to the senescence regulator S40 family.

It is found in the cytoplasm. This chain is Protein S40-1, found in Arabidopsis thaliana (Mouse-ear cress).